Consider the following 197-residue polypeptide: MQFKHKGLIIILSSPSGTGKSSLAKELLKIDNNLRLSISVTTRKPRLGEVDGINYYFKTDLEFKTLVKQNKFLEYAKIYNDYYGTPKEYVKMLLKQGLDVLFDIDWQGVRSIKKNTNNVVTIFVLPPSLEILEQRLRNRATDNEETIKLRMQSAQHEISYANEYDYVVINDDFGQTLKKIHEIIVAERAKNFSYHAH.

Residues 7–185 form the Guanylate kinase-like domain; that stretch reads GLIIILSSPS…TLKKIHEIIV (179 aa). ATP is bound at residue 14-21; the sequence is SPSGTGKS.

It belongs to the guanylate kinase family.

It is found in the cytoplasm. The catalysed reaction is GMP + ATP = GDP + ADP. Essential for recycling GMP and indirectly, cGMP. The chain is Guanylate kinase from Rickettsia typhi (strain ATCC VR-144 / Wilmington).